Here is a 179-residue protein sequence, read N- to C-terminus: Molybdopterin synthase catalytic subunit (179 aa).

Positions 1–10 are enriched in polar residues; sequence MTTSEDQTTP. The interval 1–21 is disordered; that stretch reads MTTSEDQTTPAHLDPKTYPRH. Substrate-binding positions include 127-128, Lys143, and 150-152; these read HR and KRE.

This sequence belongs to the MoaE family. MOCS2B subfamily. In terms of assembly, heterotetramer; composed of 2 small (MOCS2A) and 2 large (MOCS2B) subunits.

It localises to the cytoplasm. The enzyme catalyses 2 [molybdopterin-synthase sulfur-carrier protein]-C-terminal-Gly-aminoethanethioate + cyclic pyranopterin phosphate + H2O = molybdopterin + 2 [molybdopterin-synthase sulfur-carrier protein]-C-terminal Gly-Gly + 2 H(+). Its pathway is cofactor biosynthesis; molybdopterin biosynthesis. Its function is as follows. Catalytic subunit of the molybdopterin synthase complex, a complex that catalyzes the conversion of precursor Z into molybdopterin. Acts by mediating the incorporation of 2 sulfur atoms from thiocarboxylated MOCS2A into precursor Z to generate a dithiolene group. This chain is Molybdopterin synthase catalytic subunit, found in Aspergillus oryzae (strain ATCC 42149 / RIB 40) (Yellow koji mold).